Reading from the N-terminus, the 418-residue chain is Serine hydroxymethyltransferase (418 aa).

(6S)-5,6,7,8-tetrahydrofolate contacts are provided by residues leucine 121 and 125–127; that span reads GHL. Lysine 230 is subject to N6-(pyridoxal phosphate)lysine. (6S)-5,6,7,8-tetrahydrofolate-binding positions include glutamate 246 and 355 to 357; that span reads SPF.

The protein belongs to the SHMT family. Homodimer. It depends on pyridoxal 5'-phosphate as a cofactor.

The protein localises to the cytoplasm. It catalyses the reaction (6R)-5,10-methylene-5,6,7,8-tetrahydrofolate + glycine + H2O = (6S)-5,6,7,8-tetrahydrofolate + L-serine. It participates in one-carbon metabolism; tetrahydrofolate interconversion. The protein operates within amino-acid biosynthesis; glycine biosynthesis; glycine from L-serine: step 1/1. Functionally, catalyzes the reversible interconversion of serine and glycine with tetrahydrofolate (THF) serving as the one-carbon carrier. This reaction serves as the major source of one-carbon groups required for the biosynthesis of purines, thymidylate, methionine, and other important biomolecules. Also exhibits THF-independent aldolase activity toward beta-hydroxyamino acids, producing glycine and aldehydes, via a retro-aldol mechanism. This is Serine hydroxymethyltransferase from Streptococcus pneumoniae (strain Taiwan19F-14).